A 234-amino-acid chain; its full sequence is Venom allergen 3 (234 aa).

The first 22 residues, 1–22, serve as a signal peptide directing secretion; the sequence is MELIVSILWLAITAENLANTLA. Disulfide bonds link C26–C41, C31–C125, C52–C118, and C198–C216. One can recognise an SCP domain in the interval 69–218; sequence VNKHNELRQR…WTKHYLVCNY (150 aa). Residues 80–99 form a disordered region; sequence ASGKEMRGTNGPQPPAVKMP.

It belongs to the CRISP family. As to expression, expressed by the venom gland.

The protein resides in the secreted. This Solenopsis invicta (Red imported fire ant) protein is Venom allergen 3.